A 70-amino-acid polypeptide reads, in one-letter code: uncharacterized protein (70 aa).

The segment at 40-70 (LHQQRTAHKVTSPPSQRPQNSETKSDSQNRS) is disordered. A compositionally biased stretch (polar residues) spans 51–61 (SPPSQRPQNSE).

This is an uncharacterized protein from Bdellovibrio phage phiMH2K (Bacteriophage phiMH2K).